The primary structure comprises 335 residues: Trans-3-hydroxy-L-proline dehydratase (335 aa).

The Proton acceptor role is filled by Cys-91. Substrate contacts are provided by residues 92–93 (GH), His-222, and 256–257 (GS).

It belongs to the proline racemase family. Homodimer.

It catalyses the reaction trans-3-hydroxy-L-proline = 1-pyrroline-2-carboxylate + H2O. In terms of biological role, catalyzes the dehydration of trans-3-hydroxy-L-proline (t3LHyp) to Delta(1)-pyrroline-2-carboxylate (Pyr2C). Does not possess neither proline racemase nor 4-hydroxyproline 2-epimerase activities. The protein is Trans-3-hydroxy-L-proline dehydratase of Burkholderia cenocepacia (strain HI2424).